Consider the following 93-residue polypeptide: Putative pterin-4-alpha-carbinolamine dehydratase (93 aa).

The protein belongs to the pterin-4-alpha-carbinolamine dehydratase family.

It catalyses the reaction (4aS,6R)-4a-hydroxy-L-erythro-5,6,7,8-tetrahydrobiopterin = (6R)-L-erythro-6,7-dihydrobiopterin + H2O. This is Putative pterin-4-alpha-carbinolamine dehydratase from Trichodesmium erythraeum (strain IMS101).